Here is a 592-residue protein sequence, read N- to C-terminus: MASEHIEHKLALLPALPGCYLMKDINAQIIYVGKAKNLKNRVRSYFKSSHEGKTAKLVSEIVDFETIITSTNKEAFLLEITLIQKHQPYFNIKLKRGTGYPYIKITNERDPRLLITGDVKKDGSYYFGPYPDVYAAQETLRFLQRVYPLRRCQGHQGRPCLYYHMGQCLGACFQEVPEAAYTEQIKKIKRFLNGQVDNVKKDLTEKMATAAQEMQFERAAELRDQLRYIEATVEKQKIISNDHTPRDLFAFYMDKGWLSIQIFFIRQARLIRREKRLFPCVNTPEEELATFILQWYNRKNNVLPREILVPDGIEKQVLSDILQVPIRTPQRGEKKALMEMAQKNSRLVLEEKFRLLELDNRKTVGAQDEIMDALGLPHGHVIEAFDHSHIQGTDPVSAMVTFVDGRAEKKLYRKYKLTQTAERAGANEDANTREVIYRRYSRLLKEGKALPDLILMDGGVVELNAAKDVLENELGLTIPVAGMVKDNHHKTASLLFGEADQTIQLDPKSQGFYLLTRIQDEVHRFAISFHRQLRGKNSLSSKLDDIKGVGPKTRTKLLKNFGSMKHIKDASVEELEALGISKTVAQTIKLSL.

Residues 15 to 92 (ALPGCYLMKD…IQKHQPYFNI (78 aa)) enclose the GIY-YIG domain. The region spanning 197 to 232 (DNVKKDLTEKMATAAQEMQFERAAELRDQLRYIEAT) is the UVR domain.

This sequence belongs to the UvrC family. Interacts with UvrB in an incision complex.

It is found in the cytoplasm. The UvrABC repair system catalyzes the recognition and processing of DNA lesions. UvrC both incises the 5' and 3' sides of the lesion. The N-terminal half is responsible for the 3' incision and the C-terminal half is responsible for the 5' incision. The polypeptide is UvrABC system protein C (Latilactobacillus sakei subsp. sakei (strain 23K) (Lactobacillus sakei subsp. sakei)).